Here is a 188-residue protein sequence, read N- to C-terminus: CASP-like protein 4B3 (188 aa).

Residues 1 to 21 (MSFSPASSEPHDAPAAAGSSV) are disordered. The Cytoplasmic segment spans residues 1-42 (MSFSPASSEPHDAPAAAGSSVPASRSIAERWKMEAAPIRARL). Residues 43–63 (LLRAFAWLFSLLALVVMATDV) form a helical membrane-spanning segment. Residues 64–76 (HGRGGAQDFSTYP) lie on the Extracellular side of the membrane. The helical transmembrane segment at 77–97 (EYNYCLGMSIIALLYATAQLV) threads the bilayer. Residues 98 to 114 (RDAHRLSSGRDLVAGRK) lie on the Cytoplasmic side of the membrane. The helical transmembrane segment at 115–135 (AAAVVDFAGDQVVAYSLISGL) threads the bilayer. Over 136 to 156 (SAAAPVTDYMRQATDNLFNDS) the chain is Extracellular. Asn154 carries N-linked (GlcNAc...) asparagine glycosylation. Residues 157–177 (AAAAISLAFFAFLAISLSALI) traverse the membrane as a helical segment. The Cytoplasmic portion of the chain corresponds to 178 to 188 (SGYNLSLEAIV).

This sequence belongs to the Casparian strip membrane proteins (CASP) family. Homodimer and heterodimers.

Its subcellular location is the cell membrane. The sequence is that of CASP-like protein 4B3 from Hordeum vulgare subsp. vulgare (Domesticated barley).